A 359-amino-acid chain; its full sequence is Fc receptor-like A (359 aa).

A signal peptide spans 1 to 27 (MKLGCVLMAWALYLSLGVLWVAQMLLA). Ig-like C2-type domains are found at residues 70–159 (PFHL…ETAS) and 170–257 (PAPI…PQLE). 2 cysteine pairs are disulfide-bonded: Cys99-Cys143 and Cys192-Cys240. The segment at 259–313 (RVQGASSSAAPPTLNPAPQKSAAPGTAPEEAPGPLPPPPTPSSEDPGFSSPLGMP) is disordered. Low complexity predominate over residues 279 to 288 (SAAPGTAPEE). Over residues 289–299 (APGPLPPPPTP) the composition is skewed to pro residues.

Monomer or homodimer; disulfide-linked. As to expression, expressed specifically in primary and secondary lymphoid tissues like lymph node, spleen and tonsil. Specifically expressed in B-cells with a high level in normal germinal center B-cells, centroblasts and in a subset of diffuse large B-cell lymphomas. Highly expressed in bone marrow B-cells and weakly in earlier B lineage cells. Expressed in pre-germinal and germinal center B-cells in secondary lymphoid tissues. Also expressed in melanoma and melanocytes.

Its subcellular location is the cytoplasm. May be implicated in B-cell differentiation and lymphomagenesis. This is Fc receptor-like A (FCRLA) from Homo sapiens (Human).